A 153-amino-acid polypeptide reads, in one-letter code: Transmembrane inner ear expressed protein (153 aa).

A signal peptide spans 1–28; that stretch reads MAGRQHGSGRLWALGGAALGACLAGVAT. The Extracellular portion of the chain corresponds to 29–58; the sequence is QLVEPSTAPPKPKPPPLTKETVVFWDMRLW. The helical transmembrane segment at 59–79 threads the bilayer; the sequence is HVVGIFSLFVLSIIITLCCVF. Residues 80 to 153 lie on the Cytoplasmic side of the membrane; that stretch reads NCRVPRTRKE…KNEAKKKGEK (74 aa).

As to quaternary structure, forms the MET channel composed of TMC (TMC1 or TMC2), TMIE, TOMT, CIB (CIB2 or CIB3), LHPL5 and PCDH15. In terms of tissue distribution, expressed in brain, kidney, liver, lung and cochlea.

It localises to the membrane. In terms of biological role, auxiliary subunit of the mechanotransducer (MET) non-specific cation channel complex located at the tips of stereocilia of cochlear hair cells and that mediates sensory transduction in the auditory system. The MET complex is composed of two dimeric pore-forming ion-conducting transmembrane TMC (TMC1 or TMC2) subunits, and aided by several auxiliary proteins including LHFPL5, TMIE, CIB2/3 and TOMT, and the tip-link PCDH15. May contribute to the formation of the pore. This is Transmembrane inner ear expressed protein (Tmie) from Mus musculus (Mouse).